The chain runs to 396 residues: Chalcone synthase A (396 aa).

C170 is an active-site residue.

It belongs to the thiolase-like superfamily. Chalcone/stilbene synthases family.

It catalyses the reaction (E)-4-coumaroyl-CoA + 3 malonyl-CoA + 3 H(+) = 2',4,4',6'-tetrahydroxychalcone + 3 CO2 + 4 CoA. The protein operates within secondary metabolite biosynthesis; flavonoid biosynthesis. Its function is as follows. The primary product of this enzyme is 4,2',4',6'-tetrahydroxychalcone (also termed naringenin-chalcone or chalcone) which can under specific conditions spontaneously isomerize into naringenin. This is Chalcone synthase A (CHSA) from Ipomoea purpurea (Common morning glory).